We begin with the raw amino-acid sequence, 73 residues long: UPF0154 protein MYCGA5700 (73 aa).

Residues 5-25 (LALGLSIPLCLIVGAFVGYFV) traverse the membrane as a helical segment.

It belongs to the UPF0154 family.

It localises to the membrane. In Mycoplasmoides gallisepticum (strain R(low / passage 15 / clone 2)) (Mycoplasma gallisepticum), this protein is UPF0154 protein MYCGA5700.